The chain runs to 293 residues: Ribonuclease HIII (293 aa).

The RNase H type-2 domain occupies 78–293 (LPLIGTDEVG…TEKAKKRLER (216 aa)). Residues Asp-84, Glu-85, and Asp-187 each contribute to the a divalent metal cation site.

The protein belongs to the RNase HII family. RnhC subfamily. Mn(2+) is required as a cofactor. It depends on Mg(2+) as a cofactor.

It localises to the cytoplasm. It carries out the reaction Endonucleolytic cleavage to 5'-phosphomonoester.. Endonuclease that specifically degrades the RNA of RNA-DNA hybrids. The sequence is that of Ribonuclease HIII from Streptococcus pneumoniae (strain JJA).